A 331-amino-acid chain; its full sequence is Ketol-acid reductoisomerase (NADP(+)) (331 aa).

The KARI N-terminal Rossmann domain occupies 2 to 181 (IKKYYESDAD…GATRAVVFET (180 aa)). NADP(+) is bound by residues 25-28 (YGSQ), R48, S52, and 82-85 (DESQ). Residue H107 is part of the active site. G133 is a binding site for NADP(+). A KARI C-terminal knotted domain is found at 182 to 327 (TFREETETDL…AEIRGLMPQF (146 aa)). Positions 190, 194, 226, and 230 each coordinate Mg(2+). Substrate is bound at residue S251.

The protein belongs to the ketol-acid reductoisomerase family. Mg(2+) serves as cofactor.

It catalyses the reaction (2R)-2,3-dihydroxy-3-methylbutanoate + NADP(+) = (2S)-2-acetolactate + NADPH + H(+). The catalysed reaction is (2R,3R)-2,3-dihydroxy-3-methylpentanoate + NADP(+) = (S)-2-ethyl-2-hydroxy-3-oxobutanoate + NADPH + H(+). It participates in amino-acid biosynthesis; L-isoleucine biosynthesis; L-isoleucine from 2-oxobutanoate: step 2/4. It functions in the pathway amino-acid biosynthesis; L-valine biosynthesis; L-valine from pyruvate: step 2/4. Functionally, involved in the biosynthesis of branched-chain amino acids (BCAA). Catalyzes an alkyl-migration followed by a ketol-acid reduction of (S)-2-acetolactate (S2AL) to yield (R)-2,3-dihydroxy-isovalerate. In the isomerase reaction, S2AL is rearranged via a Mg-dependent methyl migration to produce 3-hydroxy-3-methyl-2-ketobutyrate (HMKB). In the reductase reaction, this 2-ketoacid undergoes a metal-dependent reduction by NADPH to yield (R)-2,3-dihydroxy-isovalerate. The protein is Ketol-acid reductoisomerase (NADP(+)) of Methanosphaerula palustris (strain ATCC BAA-1556 / DSM 19958 / E1-9c).